A 132-amino-acid chain; its full sequence is Large-conductance mechanosensitive channel (132 aa).

The next 2 helical transmembrane spans lie at 14-34 (VIDL…VSSL) and 67-87 (GNFI…FMFV).

Belongs to the MscL family. Homopentamer.

The protein localises to the cell membrane. Its function is as follows. Channel that opens in response to stretch forces in the membrane lipid bilayer. May participate in the regulation of osmotic pressure changes within the cell. This chain is Large-conductance mechanosensitive channel, found in Bacillus anthracis (strain A0248).